A 185-amino-acid chain; its full sequence is Segregation and condensation protein B (185 aa).

Belongs to the ScpB family. As to quaternary structure, homodimer. Homodimerization may be required to stabilize the binding of ScpA to the Smc head domains. Component of a cohesin-like complex composed of ScpA, ScpB and the Smc homodimer, in which ScpA and ScpB bind to the head domain of Smc. The presence of the three proteins is required for the association of the complex with DNA.

It localises to the cytoplasm. In terms of biological role, participates in chromosomal partition during cell division. May act via the formation of a condensin-like complex containing Smc and ScpA that pull DNA away from mid-cell into both cell halves. The polypeptide is Segregation and condensation protein B (Alkaliphilus oremlandii (strain OhILAs) (Clostridium oremlandii (strain OhILAs))).